A 129-amino-acid polypeptide reads, in one-letter code: Mini-ribonuclease 3-like protein (129 aa).

Asp-23 is an active-site residue.

It belongs to the MrnC RNase family.

Functionally, might be a ribonuclease involved in RNA processing. The sequence is that of Mini-ribonuclease 3-like protein (mrnCL) from Fusobacterium nucleatum subsp. nucleatum (strain ATCC 25586 / DSM 15643 / BCRC 10681 / CIP 101130 / JCM 8532 / KCTC 2640 / LMG 13131 / VPI 4355).